The sequence spans 165 residues: Methylated-DNA--protein-cysteine methyltransferase (165 aa).

Cys126 (nucleophile; methyl group acceptor) is an active-site residue.

The protein belongs to the MGMT family.

The protein resides in the cytoplasm. It catalyses the reaction a 6-O-methyl-2'-deoxyguanosine in DNA + L-cysteinyl-[protein] = S-methyl-L-cysteinyl-[protein] + a 2'-deoxyguanosine in DNA. The enzyme catalyses a 4-O-methyl-thymidine in DNA + L-cysteinyl-[protein] = a thymidine in DNA + S-methyl-L-cysteinyl-[protein]. Its function is as follows. Involved in the cellular defense against the biological effects of O6-methylguanine (O6-MeG) and O4-methylthymine (O4-MeT) in DNA. Repairs the methylated nucleobase in DNA by stoichiometrically transferring the methyl group to a cysteine residue in the enzyme. This is a suicide reaction: the enzyme is irreversibly inactivated. The chain is Methylated-DNA--protein-cysteine methyltransferase from Mycobacterium leprae (strain TN).